A 603-amino-acid chain; its full sequence is Protein regulator of cytokinesis 1 (603 aa).

The dimerization stretch occupies residues methionine 1–leucine 341. Coiled-coil stretches lie at residues glutamate 34–leucine 65, isoleucine 96–cysteine 136, serine 211–leucine 246, arginine 272–phenylalanine 304, and glycine 383–leucine 463. Residues arginine 342–serine 466 form a spectrin-fold region. Residues lysine 447–glutamate 459 are compositionally biased toward basic and acidic residues. A disordered region spans residues lysine 447–valine 502. Residues threonine 467 to serine 603 are unstructured, Arg/Lys rich. Threonine 470 is modified (phosphothreonine; by CDK1). The span at lysine 484 to isoleucine 499 shows a compositional bias: polar residues. 2 positions are modified to phosphoserine: serine 510 and serine 568. At threonine 575 the chain carries Phosphothreonine. Positions leucine 583–serine 603 are disordered. Positions serine 589 to serine 603 are enriched in polar residues. Threonine 599 is modified (phosphothreonine; by PLK1).

Belongs to the MAP65/ASE1 family. In terms of assembly, homodimer. Interacts with the C-terminal Rho-GAP domain and the basic region of RACGAP1. The interaction with RACGAP1 inhibits its GAP activity towards CDC42 in vitro, which may be required for maintaining normal spindle morphology. Interacts (via N-terminus) with the C-terminus of CENPE (via C-terminus); the interaction occurs during late mitosis. Interacts (via N-terminus) with KIF4A (via C-terminus); the interaction is required for the progression of mitosis. Interacts (via N-terminus) with KIF23 (via C-terminus); the interaction occurs during late mitosis. Interacts with KIF14 and KIF20A. Interacts with PLK1. Interacts with KIF20B. Interacts with CCDC66. In terms of processing, phosphorylation by CDK1 in early mitosis holds PRC1 in an inactive monomeric state, during the metaphase to anaphase transition, PRC1 is dephosphorylated, promoting interaction with KIF4A, which then translocates PRC1 along mitotic spindles to the plus ends of antiparallel interdigitating microtubules. Dephosphorylation also promotes MT-bundling activity by allowing dimerization. Phosphorylation by CDK1 prevents PLK1-binding: upon degradation of CDK1 at anaphase and dephosphorylation, it is then phosphorylated by PLK1, leading to cytokinesis.

The protein localises to the nucleus. Its subcellular location is the cytoplasm. It localises to the cytoskeleton. The protein resides in the spindle pole. It is found in the midbody. In terms of biological role, key regulator of cytokinesis that cross-links antiparrallel microtubules at an average distance of 35 nM. Essential for controlling the spatiotemporal formation of the midzone and successful cytokinesis. Required for KIF14 localization to the central spindle and midbody. Required to recruit PLK1 to the spindle. Stimulates PLK1 phosphorylation of RACGAP1 to allow recruitment of ECT2 to the central spindle. Acts as an oncogene for promoting bladder cancer cells proliferation, apoptosis inhibition and carcinogenic progression. The chain is Protein regulator of cytokinesis 1 from Mus musculus (Mouse).